Consider the following 443-residue polypeptide: Glucose-6-phosphate isomerase (443 aa).

Glu285 functions as the Proton donor in the catalytic mechanism. Active-site residues include His306 and Lys420.

The protein belongs to the GPI family.

It is found in the cytoplasm. The enzyme catalyses alpha-D-glucose 6-phosphate = beta-D-fructose 6-phosphate. It participates in carbohydrate biosynthesis; gluconeogenesis. The protein operates within carbohydrate degradation; glycolysis; D-glyceraldehyde 3-phosphate and glycerone phosphate from D-glucose: step 2/4. Functionally, catalyzes the reversible isomerization of glucose-6-phosphate to fructose-6-phosphate. This Staphylococcus haemolyticus (strain JCSC1435) protein is Glucose-6-phosphate isomerase.